Consider the following 486-residue polypeptide: Glutamyl-tRNA(Gln) amidotransferase subunit A (486 aa).

Residues K77 and S152 each act as charge relay system in the active site. The active-site Acyl-ester intermediate is the S176.

The protein belongs to the amidase family. GatA subfamily. In terms of assembly, heterotrimer of A, B and C subunits.

The catalysed reaction is L-glutamyl-tRNA(Gln) + L-glutamine + ATP + H2O = L-glutaminyl-tRNA(Gln) + L-glutamate + ADP + phosphate + H(+). In terms of biological role, allows the formation of correctly charged Gln-tRNA(Gln) through the transamidation of misacylated Glu-tRNA(Gln) in organisms which lack glutaminyl-tRNA synthetase. The reaction takes place in the presence of glutamine and ATP through an activated gamma-phospho-Glu-tRNA(Gln). In Pediococcus pentosaceus (strain ATCC 25745 / CCUG 21536 / LMG 10740 / 183-1w), this protein is Glutamyl-tRNA(Gln) amidotransferase subunit A.